The primary structure comprises 117 residues: S-adenosylmethionine decarboxylase proenzyme (117 aa).

Ser63 (schiff-base intermediate with substrate; via pyruvic acid) is an active-site residue. Pyruvic acid (Ser); by autocatalysis is present on Ser63. The active-site Proton acceptor; for processing activity is the His68. Cys83 functions as the Proton donor; for catalytic activity in the catalytic mechanism.

Belongs to the prokaryotic AdoMetDC family. Type 1 subfamily. Heterotetramer of two alpha and two beta chains arranged as a dimer of alpha/beta heterodimers. Pyruvate is required as a cofactor. Post-translationally, is synthesized initially as an inactive proenzyme. Formation of the active enzyme involves a self-maturation process in which the active site pyruvoyl group is generated from an internal serine residue via an autocatalytic post-translational modification. Two non-identical subunits are generated from the proenzyme in this reaction, and the pyruvate is formed at the N-terminus of the alpha chain, which is derived from the carboxyl end of the proenzyme. The post-translation cleavage follows an unusual pathway, termed non-hydrolytic serinolysis, in which the side chain hydroxyl group of the serine supplies its oxygen atom to form the C-terminus of the beta chain, while the remainder of the serine residue undergoes an oxidative deamination to produce ammonia and the pyruvoyl group blocking the N-terminus of the alpha chain.

It catalyses the reaction S-adenosyl-L-methionine + H(+) = S-adenosyl 3-(methylsulfanyl)propylamine + CO2. It participates in amine and polyamine biosynthesis; S-adenosylmethioninamine biosynthesis; S-adenosylmethioninamine from S-adenosyl-L-methionine: step 1/1. Catalyzes the decarboxylation of S-adenosylmethionine to S-adenosylmethioninamine (dcAdoMet), the propylamine donor required for the synthesis of the polyamines spermine and spermidine from the diamine putrescine. The protein is S-adenosylmethionine decarboxylase proenzyme of Methanococcus aeolicus (strain ATCC BAA-1280 / DSM 17508 / OCM 812 / Nankai-3).